The chain runs to 701 residues: Ribosomal RNA large subunit methyltransferase K/L (701 aa).

The region spanning 43–155 is the THUMP domain; it reads LLYKSLMWSR…NNILHIMLDL (113 aa).

Belongs to the methyltransferase superfamily. RlmKL family.

The protein resides in the cytoplasm. It catalyses the reaction guanosine(2445) in 23S rRNA + S-adenosyl-L-methionine = N(2)-methylguanosine(2445) in 23S rRNA + S-adenosyl-L-homocysteine + H(+). The enzyme catalyses guanosine(2069) in 23S rRNA + S-adenosyl-L-methionine = N(2)-methylguanosine(2069) in 23S rRNA + S-adenosyl-L-homocysteine + H(+). Functionally, specifically methylates the guanine in position 2445 (m2G2445) and the guanine in position 2069 (m7G2069) of 23S rRNA. The sequence is that of Ribosomal RNA large subunit methyltransferase K/L from Buchnera aphidicola subsp. Acyrthosiphon pisum (strain APS) (Acyrthosiphon pisum symbiotic bacterium).